A 128-amino-acid chain; its full sequence is MATAPVKKKKKVNVTQDGIVHIKATFNNIAVTITDVTGNTVSWSTAGKNGFKGSKKNTPYASQVTAESAAKEAYDLGMRKVDVRIKGPGSGRDAAIRSLQNAGLEVKTISDITPLPHNGCRPPKRRRV.

It belongs to the universal ribosomal protein uS11 family. In terms of assembly, part of the 30S ribosomal subunit. Interacts with proteins S7 and S18. Binds to IF-3.

Functionally, located on the platform of the 30S subunit, it bridges several disparate RNA helices of the 16S rRNA. Forms part of the Shine-Dalgarno cleft in the 70S ribosome. The sequence is that of Small ribosomal subunit protein uS11 from Chloroherpeton thalassium (strain ATCC 35110 / GB-78).